The primary structure comprises 309 residues: 1,2-phenylacetyl-CoA epoxidase, subunit A (309 aa).

Substrate-binding positions include Arg33, Gln37, 103 to 106 (KYSS), Asn132, Met193, 202 to 204 (SPN), Lys214, and Asn218.

In terms of assembly, forms a stable heterotetramer (dimer of heterodimers) with PaaC. Fe cation serves as cofactor.

It catalyses the reaction phenylacetyl-CoA + NADPH + O2 + H(+) = 2-(1,2-epoxy-1,2-dihydrophenyl)acetyl-CoA + NADP(+) + H2O. Its pathway is aromatic compound metabolism; phenylacetate degradation. In terms of biological role, component of 1,2-phenylacetyl-CoA epoxidase multicomponent enzyme system which catalyzes the reduction of phenylacetyl-CoA (PA-CoA) to form 1,2-epoxyphenylacetyl-CoA. The subunit A is the catalytic subunit involved in the incorporation of one atom of molecular oxygen into phenylacetyl-CoA. The sequence is that of 1,2-phenylacetyl-CoA epoxidase, subunit A (paaA) from Escherichia coli (strain K12).